Reading from the N-terminus, the 240-residue chain is tRNA (guanine-N(1)-)-methyltransferase (240 aa).

S-adenosyl-L-methionine-binding positions include glycine 108 and 127–132 (LGDFIL).

This sequence belongs to the RNA methyltransferase TrmD family. In terms of assembly, homodimer.

The protein resides in the cytoplasm. It catalyses the reaction guanosine(37) in tRNA + S-adenosyl-L-methionine = N(1)-methylguanosine(37) in tRNA + S-adenosyl-L-homocysteine + H(+). Functionally, specifically methylates guanosine-37 in various tRNAs. The sequence is that of tRNA (guanine-N(1)-)-methyltransferase from Streptococcus mutans serotype c (strain ATCC 700610 / UA159).